A 433-amino-acid chain; its full sequence is MRALLAHLLLCVLVVSASKGSRELQVPSDCGCLNGGTCMSNKYFSSIHWCNCPKKFGGQHCEIDKSKTCYEGNGHFYRGKASTDTMGRSCLAWNSATVLQQTYHAHRSDALQLGLGKHNYCRNPDNRRRPWCYVQVGLKQRVQECMVHNCADGKKPSSPPEELQFQCGQRTLRPRFKIVGGEFTTIENQPWFAAIYRRHRGGSVTYVCGGSLISPCWVVSATHCFINYPKKEDYIVYLGRSRLNSNTQGEMKFEVENLILHEDYSADTLAHHNDIALLKIRSKEGRCAQPSRTIQTICLPSMYNDPNDPPFGTSCEITGFGKENSTDYLYPEQLKMTVVKLVSHQKCQQPHYYGSEVTTKMLCAADPQWETDSCQGDSGGPLVCSIQGHMTLTGIVSWGRGCALKDKPGVYTRVSRFLPWIHSHTREQNGLAL.

Positions 1–20 (MRALLAHLLLCVLVVSASKG) are cleaved as a signal peptide. An EGF-like domain is found at 26–62 (VPSDCGCLNGGTCMSNKYFSSIHWCNCPKKFGGQHCE). 6 cysteine pairs are disulfide-bonded: cysteine 30–cysteine 38, cysteine 32–cysteine 50, cysteine 52–cysteine 61, cysteine 69–cysteine 150, cysteine 90–cysteine 132, and cysteine 121–cysteine 145. The binds urokinase plasminogen activator surface receptor stretch occupies residues 33 to 56 (LNGGTCMSNKYFSSIHWCNCPKKF). The Kringle domain occupies 69–150 (CYEGNGHFYR…RVQECMVHNC (82 aa)). The segment at 151-177 (ADGKKPSSPPEELQFQCGQRTLRPRFK) is connecting peptide. Serine 157 carries the post-translational modification Phosphoserine. 6 cysteine pairs are disulfide-bonded: cysteine 167-cysteine 298, cysteine 208-cysteine 224, cysteine 216-cysteine 287, cysteine 315-cysteine 384, cysteine 347-cysteine 363, and cysteine 374-cysteine 402. A Peptidase S1 domain is found at 178–426 (IVGGEFTTIE…FLPWIHSHTR (249 aa)). Catalysis depends on charge relay system residues histidine 223 and aspartate 274. The N-linked (GlcNAc...) asparagine glycan is linked to asparagine 324. Position 325 is a phosphoserine (serine 325). Catalysis depends on serine 378, which acts as the Charge relay system.

This sequence belongs to the peptidase S1 family. As to quaternary structure, found in high and low molecular mass forms. Each consists of two chains, A and B. The high molecular mass form contains a long chain A which is cleaved to yield a short chain A. Forms heterodimer with SERPINA5. Binds LRP1B; binding is followed by internalization and degradation. Interacts with MRC2. Interacts with PLAUR. In complex with SERPINE1, interacts with PLAUR/uPAR. Interacts with SORL1 and LRP1, either alone or in complex with SERPINE1; these interactions are abolished in the presence of LRPAP1/RAP. The ternary complex composed of PLAUR-PLAU-PAI1 also interacts with SORLA. In terms of processing, phosphorylation of Ser-157 and Ser-325 abolishes proadhesive ability but does not interfere with receptor binding. Produced as an inactive single-chain protein (pro-uPA or sc-uPA), is processed into the active disulfide-linked two-chain form of PLAU/uPA by a proteolytic event mediated, at least, by TMPRSS4.

The protein localises to the secreted. It carries out the reaction Specific cleavage of Arg-|-Val bond in plasminogen to form plasmin.. With respect to regulation, inhibited by SERPINA5. Inhibited by SERPINE1. Its function is as follows. Specifically cleaves the zymogen plasminogen to form the active enzyme plasmin. The chain is Urokinase-type plasminogen activator (PLAU) from Papio cynocephalus (Yellow baboon).